We begin with the raw amino-acid sequence, 228 residues long: L-ribulose-5-phosphate 4-epimerase UlaF (228 aa).

Substrate is bound by residues 26 to 27 (GN), 43 to 44 (SG), and 72 to 73 (SS). The Zn(2+) site is built by D74, H93, and H95. D118 functions as the Proton donor/acceptor in the catalytic mechanism. H167 contributes to the Zn(2+) binding site. Residue Y225 is the Proton donor/acceptor of the active site.

This sequence belongs to the aldolase class II family. AraD/FucA subfamily. Requires Zn(2+) as cofactor.

The enzyme catalyses L-ribulose 5-phosphate = D-xylulose 5-phosphate. It participates in cofactor degradation; L-ascorbate degradation; D-xylulose 5-phosphate from L-ascorbate: step 4/4. Catalyzes the isomerization of L-ribulose 5-phosphate to D-xylulose 5-phosphate. Is involved in the anaerobic L-ascorbate utilization. This Escherichia coli O17:K52:H18 (strain UMN026 / ExPEC) protein is L-ribulose-5-phosphate 4-epimerase UlaF.